The sequence spans 239 residues: Exosome complex exonuclease RRP46 homolog (239 aa).

Methionine 1 is modified (N-acetylmethionine).

Belongs to the RNase PH family. As to quaternary structure, probable component of the RNA exosome complex.

Its subcellular location is the nucleus. It localises to the nucleolus. In terms of biological role, probable component of the exosome 3'-&gt;5' exoribonuclease complex, a complex that degrades inherently unstable mRNAs containing AU-rich elements (AREs) within their 3'-untranslated regions. The polypeptide is Exosome complex exonuclease RRP46 homolog (Arabidopsis thaliana (Mouse-ear cress)).